The following is a 196-amino-acid chain: uncharacterized protein (196 aa).

The chain crosses the membrane as a helical span at residues 26–46; sequence ITFFFILLICFICILLLLAIF.

The protein localises to the membrane. This is an uncharacterized protein from Mus musculus (Mouse).